Here is a 203-residue protein sequence, read N- to C-terminus: Endo-type membrane-bound lytic murein transglycosylase A (203 aa).

An N-terminal signal peptide occupies residues methionine 1–glycine 15. A lipid anchor (N-palmitoyl cysteine) is attached at cysteine 16. A lipid anchor (S-diacylglycerol cysteine) is attached at cysteine 16.

This sequence belongs to the transglycosylase Slt family.

It is found in the cell outer membrane. The catalysed reaction is Endolytic cleavage of the (1-&gt;4)-beta-glycosidic linkage between N-acetylmuramic acid (MurNAc) and N-acetylglucosamine (GlcNAc) residues in peptidoglycan with concomitant formation of a 1,6-anhydrobond in the MurNAc residue.. Its function is as follows. Murein-degrading enzyme. May play a role in recycling of muropeptides during cell elongation and/or cell division. Preferentially cleaves at a distance of more than two disaccharide units from the ends of the glycan chain. This Escherichia fergusonii (strain ATCC 35469 / DSM 13698 / CCUG 18766 / IAM 14443 / JCM 21226 / LMG 7866 / NBRC 102419 / NCTC 12128 / CDC 0568-73) protein is Endo-type membrane-bound lytic murein transglycosylase A.